Consider the following 677-residue polypeptide: Protein hook (677 aa).

Residues Asn6 to Ala123 enclose the Calponin-homology (CH) domain. Coiled-coil stretches lie at residues Glu135–His436 and Gln478–Val588.

It belongs to the hook family. As to quaternary structure, homodimer. Interacts with microtubules via its N-terminus.

The protein localises to the cytoplasm. It is found in the cytoskeleton. It localises to the endosome. The protein resides in the synapse. In terms of biological role, involved in endocytic trafficking by stabilizing organelles of the endocytic pathway. Probably acts as a cytoskeletal linker protein required to tether endosome vesicles to the cytoskeleton. Involved in modulation of endocytosis at stages required for down-regulation of membrane proteins that control synapse size. Not involved in synaptic vesicle recycling. Required in R7 cells for boss endocytosis into multivesicular bodies (MVBs). Has a role in regulating adult longevity. The chain is Protein hook from Drosophila pseudoobscura pseudoobscura (Fruit fly).